Here is a 410-residue protein sequence, read N- to C-terminus: Peptidase T (410 aa).

H78 contributes to the Zn(2+) binding site. The active site involves D80. Residue D140 participates in Zn(2+) binding. The active-site Proton acceptor is E174. Zn(2+)-binding residues include E175, D197, and H379.

Belongs to the peptidase M20B family. Requires Zn(2+) as cofactor.

The protein resides in the cytoplasm. The enzyme catalyses Release of the N-terminal residue from a tripeptide.. Its function is as follows. Cleaves the N-terminal amino acid of tripeptides. In Vibrio atlanticus (strain LGP32) (Vibrio splendidus (strain Mel32)), this protein is Peptidase T.